A 456-amino-acid polypeptide reads, in one-letter code: tRNA-2-methylthio-N(6)-dimethylallyladenosine synthase (456 aa).

The MTTase N-terminal domain occupies 1–116; it reads MTYFFETYGC…FESIFQEIEQ (116 aa). C10, C46, C79, C162, C166, and C169 together coordinate [4Fe-4S] cluster. The 237-residue stretch at 148–384 folds into the Radical SAM core domain; that stretch reads SEGSFQSFIP…IALQMSTTLK (237 aa). The TRAM domain maps to 387–452; sequence RARVGKTLPV…GRTLRAHLVQ (66 aa).

This sequence belongs to the methylthiotransferase family. MiaB subfamily. As to quaternary structure, monomer. Requires [4Fe-4S] cluster as cofactor.

The protein localises to the cytoplasm. It catalyses the reaction N(6)-dimethylallyladenosine(37) in tRNA + (sulfur carrier)-SH + AH2 + 2 S-adenosyl-L-methionine = 2-methylsulfanyl-N(6)-dimethylallyladenosine(37) in tRNA + (sulfur carrier)-H + 5'-deoxyadenosine + L-methionine + A + S-adenosyl-L-homocysteine + 2 H(+). Functionally, catalyzes the methylthiolation of N6-(dimethylallyl)adenosine (i(6)A), leading to the formation of 2-methylthio-N6-(dimethylallyl)adenosine (ms(2)i(6)A) at position 37 in tRNAs that read codons beginning with uridine. This is tRNA-2-methylthio-N(6)-dimethylallyladenosine synthase from Treponema pallidum (strain Nichols).